Reading from the N-terminus, the 258-residue chain is Sec-independent protein translocase protein TatC (258 aa).

Topologically, residues 2–23 (SVEDTQPLITHLIELRKRLLNC) are cytoplasmic. The helical transmembrane segment at 24 to 44 (IISVIVIFLCLVYFANDIYHL) threads the bilayer. The Periplasmic portion of the chain corresponds to 45 to 75 (VSAPLIKQLPQGSTMIATDVASPFFTPIKLT). The chain crosses the membrane as a helical span at residues 76–96 (FMVSLILSAPVILYQVWAFIA). The Cytoplasmic portion of the chain corresponds to 97–115 (PALYKHERRLVVPLLVSSS). Residues 116–136 (LLFYIGMAFAYFVVFPLAFGF) traverse the membrane as a helical segment. At 137–156 (LANTAPEGVQVSTDIASYLS) the chain is on the periplasmic side. The chain crosses the membrane as a helical span at residues 157 to 177 (FVMALFMAFGVSFEVPVAIVL). Residues 178–192 (LCWMGITSPEDLRKK) lie on the Cytoplasmic side of the membrane. Residues 193 to 210 (RPYVLVGAFVVGMLLTPP) form a helical membrane-spanning segment. A topological domain (periplasmic) is located at residue Asp211. Residues 212–232 (VFSQTLLAIPMYCLFEIGVFF) form a helical membrane-spanning segment. The Cytoplasmic portion of the chain corresponds to 233 to 258 (SRFYVGKGRNREEENDAEAESEKTEE).

This sequence belongs to the TatC family. The Tat system comprises two distinct complexes: a TatABC complex, containing multiple copies of TatA, TatB and TatC subunits, and a separate TatA complex, containing only TatA subunits. Substrates initially bind to the TatABC complex, which probably triggers association of the separate TatA complex to form the active translocon.

Its subcellular location is the cell inner membrane. In terms of biological role, part of the twin-arginine translocation (Tat) system that transports large folded proteins containing a characteristic twin-arginine motif in their signal peptide across membranes. Together with TatB, TatC is part of a receptor directly interacting with Tat signal peptides. This chain is Sec-independent protein translocase protein TatC, found in Escherichia coli O6:H1 (strain CFT073 / ATCC 700928 / UPEC).